The primary structure comprises 453 residues: Bifunctional protein GlmU (453 aa).

Residues 1 to 225 (MHAHVILAAG…AEEALGVNTR (225 aa)) form a pyrophosphorylase region. UDP-N-acetyl-alpha-D-glucosamine-binding positions include 7-10 (LAAG), lysine 21, glutamine 72, and 77-78 (GT). Aspartate 102 serves as a coordination point for Mg(2+). Glycine 138, glutamate 152, asparagine 167, and asparagine 223 together coordinate UDP-N-acetyl-alpha-D-glucosamine. Asparagine 223 lines the Mg(2+) pocket. Residues 226–246 (EELARVEGVLLRRLRAEWMGK) are linker. The tract at residues 247 to 453 (GVRMILPETI…GYALRKLGEG (207 aa)) is N-acetyltransferase. The UDP-N-acetyl-alpha-D-glucosamine site is built by arginine 329 and lysine 347. The Proton acceptor role is filled by histidine 359. UDP-N-acetyl-alpha-D-glucosamine contacts are provided by tyrosine 362 and asparagine 373. Acetyl-CoA contacts are provided by residues alanine 376, 382–383 (NY), serine 401, alanine 419, and arginine 436.

It in the N-terminal section; belongs to the N-acetylglucosamine-1-phosphate uridyltransferase family. This sequence in the C-terminal section; belongs to the transferase hexapeptide repeat family. Homotrimer. It depends on Mg(2+) as a cofactor.

It is found in the cytoplasm. The catalysed reaction is alpha-D-glucosamine 1-phosphate + acetyl-CoA = N-acetyl-alpha-D-glucosamine 1-phosphate + CoA + H(+). It carries out the reaction N-acetyl-alpha-D-glucosamine 1-phosphate + UTP + H(+) = UDP-N-acetyl-alpha-D-glucosamine + diphosphate. It participates in nucleotide-sugar biosynthesis; UDP-N-acetyl-alpha-D-glucosamine biosynthesis; N-acetyl-alpha-D-glucosamine 1-phosphate from alpha-D-glucosamine 6-phosphate (route II): step 2/2. The protein operates within nucleotide-sugar biosynthesis; UDP-N-acetyl-alpha-D-glucosamine biosynthesis; UDP-N-acetyl-alpha-D-glucosamine from N-acetyl-alpha-D-glucosamine 1-phosphate: step 1/1. Its pathway is bacterial outer membrane biogenesis; LPS lipid A biosynthesis. In terms of biological role, catalyzes the last two sequential reactions in the de novo biosynthetic pathway for UDP-N-acetylglucosamine (UDP-GlcNAc). The C-terminal domain catalyzes the transfer of acetyl group from acetyl coenzyme A to glucosamine-1-phosphate (GlcN-1-P) to produce N-acetylglucosamine-1-phosphate (GlcNAc-1-P), which is converted into UDP-GlcNAc by the transfer of uridine 5-monophosphate (from uridine 5-triphosphate), a reaction catalyzed by the N-terminal domain. The chain is Bifunctional protein GlmU from Thermus thermophilus (strain ATCC BAA-163 / DSM 7039 / HB27).